We begin with the raw amino-acid sequence, 187 residues long: Casparian strip membrane protein 5 (187 aa).

The Cytoplasmic portion of the chain corresponds to 1–24; the sequence is MKSGQAEIVETSKGIQKSGLMSRR. Residues 25–45 form a helical membrane-spanning segment; it reads IAILEFILRIVAFFNTIGSAI. At 46 to 74 the chain is on the extracellular side; the sequence is LMGTTHETLPFFTQFIRFQAEYNDLPALT. A helical membrane pass occupies residues 75–95; the sequence is FFVVANAVVSGYLIMSLTLAF. Residues 96–107 lie on the Cytoplasmic side of the membrane; that stretch reads VHIVKRKTQNTR. A helical transmembrane segment spans residues 108–128; it reads ILLIVLDVAMLGLLSAGASSA. The Extracellular portion of the chain corresponds to 129 to 161; that stretch reads AAIVYLAHNGNNKTNWFAICQQFNSFCERISGS. Asparagine 140 is a glycosylation site (N-linked (GlcNAc...) asparagine). The chain crosses the membrane as a helical span at residues 162–182; it reads LIGSFIAVVLLILLILLSAIA. The Cytoplasmic portion of the chain corresponds to 183–187; sequence LSRRH.

It belongs to the Casparian strip membrane proteins (CASP) family. Homodimer and heterodimers.

It localises to the cell membrane. Functionally, regulates membrane-cell wall junctions and localized cell wall deposition. Required for establishment of the Casparian strip membrane domain (CSD) and the subsequent formation of Casparian strips, a cell wall modification of the root endodermis that determines an apoplastic barrier between the intraorganismal apoplasm and the extraorganismal apoplasm and prevents lateral diffusion. The polypeptide is Casparian strip membrane protein 5 (Arabidopsis lyrata subsp. lyrata (Lyre-leaved rock-cress)).